The following is a 180-amino-acid chain: Large ribosomal subunit protein uL5 (180 aa).

Belongs to the universal ribosomal protein uL5 family. Part of the 50S ribosomal subunit; part of the 5S rRNA/L5/L18/L25 subcomplex. Contacts the 5S rRNA and the P site tRNA. Forms a bridge to the 30S subunit in the 70S ribosome.

In terms of biological role, this is one of the proteins that bind and probably mediate the attachment of the 5S RNA into the large ribosomal subunit, where it forms part of the central protuberance. In the 70S ribosome it contacts protein S13 of the 30S subunit (bridge B1b), connecting the 2 subunits; this bridge is implicated in subunit movement. Contacts the P site tRNA; the 5S rRNA and some of its associated proteins might help stabilize positioning of ribosome-bound tRNAs. This chain is Large ribosomal subunit protein uL5, found in Heliobacterium modesticaldum (strain ATCC 51547 / Ice1).